Here is a 654-residue protein sequence, read N- to C-terminus: Probable Xaa-Pro aminopeptidase P (654 aa).

Mn(2+) contacts are provided by Asp449, Asp460, Glu558, and Glu572.

It belongs to the peptidase M24B family. Mn(2+) is required as a cofactor.

The catalysed reaction is Release of any N-terminal amino acid, including proline, that is linked to proline, even from a dipeptide or tripeptide.. Its function is as follows. Catalyzes the removal of a penultimate prolyl residue from the N-termini of peptides. The chain is Probable Xaa-Pro aminopeptidase P (ampp) from Aspergillus fumigatus (strain CBS 144.89 / FGSC A1163 / CEA10) (Neosartorya fumigata).